A 120-amino-acid polypeptide reads, in one-letter code: Crustacean hyperglycemic hormones 2 (120 aa).

An N-terminal signal peptide occupies residues 1–27 (MIAFHMVWSALLASLLLLLLAPSASPV). Disulfide bonds link C53/C89, C69/C85, and C72/C98. V118 bears the Valine amide mark.

It belongs to the arthropod CHH/MIH/GIH/VIH hormone family.

It is found in the secreted. Hormone found in the sinus gland of isopods and decapods which controls the blood sugar level. Has a secretagogue action over the amylase released from the midgut gland. May act as a stress hormone and may be involved in the control of molting and reproduction. In Penaeus japonicus (Kuruma prawn), this protein is Crustacean hyperglycemic hormones 2.